We begin with the raw amino-acid sequence, 290 residues long: 4-hydroxybenzoate octaprenyltransferase (290 aa).

8 helical membrane-spanning segments follow: residues 40–60, 99–119, 120–140, 142–162, 165–185, 215–235, 239–259, and 267–287; these read IAGA…GVVI, LALF…LNEL, TFWL…TKRF, FMPQ…AFAA, GEVP…TVAY, LMIA…GHRL, WPWY…HSLI, and SFHA…GLYF.

This sequence belongs to the UbiA prenyltransferase family. Mg(2+) serves as cofactor.

The protein localises to the cell inner membrane. The enzyme catalyses all-trans-octaprenyl diphosphate + 4-hydroxybenzoate = 4-hydroxy-3-(all-trans-octaprenyl)benzoate + diphosphate. Its pathway is cofactor biosynthesis; ubiquinone biosynthesis. In terms of biological role, catalyzes the prenylation of para-hydroxybenzoate (PHB) with an all-trans polyprenyl group. Mediates the second step in the final reaction sequence of ubiquinone-8 (UQ-8) biosynthesis, which is the condensation of the polyisoprenoid side chain with PHB, generating the first membrane-bound Q intermediate 3-octaprenyl-4-hydroxybenzoate. In Alcanivorax borkumensis (strain ATCC 700651 / DSM 11573 / NCIMB 13689 / SK2), this protein is 4-hydroxybenzoate octaprenyltransferase.